The following is a 99-amino-acid chain: UPF0235 protein AHA_3661 (99 aa).

This sequence belongs to the UPF0235 family.

In Aeromonas hydrophila subsp. hydrophila (strain ATCC 7966 / DSM 30187 / BCRC 13018 / CCUG 14551 / JCM 1027 / KCTC 2358 / NCIMB 9240 / NCTC 8049), this protein is UPF0235 protein AHA_3661.